A 163-amino-acid chain; its full sequence is Nucleotide-binding protein RHA1_ro01989 (163 aa).

It belongs to the YajQ family.

Nucleotide-binding protein. The protein is Nucleotide-binding protein RHA1_ro01989 of Rhodococcus jostii (strain RHA1).